The sequence spans 46 residues: Lariatin (46 aa).

The propeptide occupies 1 to 26; it reads MTSQPSKKTYNAPSLVQRGKFARTTA. The segment at residues 27–34 is a cross-link (isoglutamyl glycine isopeptide (Gly-Glu)); that stretch reads GSQLVYRE.

The linear precursor LarA is probably cleaved by the putative peptidase LarD, generating linear 18-residue Lariatin-A or 20-residue Lariatin-B. These linear peptides are probably cross-linked by LarB. Finally, lariatins A and B may be exported by ABC transporter LarE.

Functionally, peptide antibiotic with selective activity against Mycobacterium species (M.smegmatis, MIC=3.13 ug/ml and M.tuberculosis, MIC=0.39 ug/ml). it is plausible that the target of lariatins lies within the cell wall in mycobacteria. In terms of biological role, peptide antibiotic with selective activity against Mycobacterium species (M.smegmatis, MIC=6.25 ug/ml). The polypeptide is Lariatin (Rhodococcus jostii).